The primary structure comprises 158 residues: Cytochrome c2 (158 aa).

Gln1 is modified (pyrrolidone carboxylic acid). Residues Cys18, Cys21, His22, and Met102 each coordinate heme c. A disordered region spans residues 129–158; the sequence is AEAAPAADAAAPAAADAAAPAEPAAEGAAT.

This sequence belongs to the cytochrome c family. In terms of processing, binds 1 heme c group covalently per subunit.

The protein resides in the periplasm. Cytochrome c2 is found mainly in purple, non-sulfur, photosynthetic bacteria where it functions as the electron donor to the oxidized bacteriochlorophyll in the photophosphorylation pathway. However, it may also have a role in the respiratory chain and is found in some non-photosynthetic bacteria. This is Cytochrome c2 from Fuscovulum blasticum (Rhodobacter blasticus).